The primary structure comprises 207 residues: LexA repressor (207 aa).

The H-T-H motif DNA-binding region spans 28–48; it reads RAEIASRLGFKSANAAEEHLK. Residues Ser-124 and Lys-161 each act as for autocatalytic cleavage activity in the active site.

This sequence belongs to the peptidase S24 family. Homodimer.

The catalysed reaction is Hydrolysis of Ala-|-Gly bond in repressor LexA.. In terms of biological role, represses a number of genes involved in the response to DNA damage (SOS response), including recA and lexA. In the presence of single-stranded DNA, RecA interacts with LexA causing an autocatalytic cleavage which disrupts the DNA-binding part of LexA, leading to derepression of the SOS regulon and eventually DNA repair. The protein is LexA repressor of Shewanella amazonensis (strain ATCC BAA-1098 / SB2B).